The sequence spans 222 residues: 4'-phosphopantetheinyl transferase Npt (222 aa).

Residues Asp-105, Glu-107, and Glu-147 each coordinate Mg(2+).

The protein belongs to the P-Pant transferase superfamily. Monomer. Mg(2+) is required as a cofactor.

It catalyses the reaction apo-[ACP] + CoA = holo-[ACP] + adenosine 3',5'-bisphosphate + H(+). Functionally, catalyzes the transfer of the 4'-phosphopantetheine moiety from coenzyme A to a serine residue in the acyl-carrier domain of carboxylic acid reductase Car, thus converting apo-Car to fully active holo-Car. Is probably also responsible for the activation of other proteins with phosphopantetheine attachment sites. In Nocardia iowensis, this protein is 4'-phosphopantetheinyl transferase Npt (npt).